Here is a 377-residue protein sequence, read N- to C-terminus: N-acetyldiaminopimelate deacetylase (377 aa).

Residue Asp-70 is part of the active site. The active-site Proton acceptor is Glu-129.

Belongs to the peptidase M20A family. N-acetyldiaminopimelate deacetylase subfamily.

It catalyses the reaction N-acetyl-(2S,6S)-2,6-diaminopimelate + H2O = (2S,6S)-2,6-diaminopimelate + acetate. It participates in amino-acid biosynthesis; L-lysine biosynthesis via DAP pathway; LL-2,6-diaminopimelate from (S)-tetrahydrodipicolinate (acetylase route): step 3/3. Functionally, catalyzes the conversion of N-acetyl-diaminopimelate to diaminopimelate and acetate. The chain is N-acetyldiaminopimelate deacetylase from Streptococcus thermophilus (strain CNRZ 1066).